A 107-amino-acid polypeptide reads, in one-letter code: Colipase (107 aa).

Positions 1 to 17 (MEKVLVLLLVALSVAYA) are cleaved as a signal peptide. The propeptide at 18 to 22 (APGPR) is enterostatin, activation peptide. 5 disulfides stabilise this stretch: cysteine 34–cysteine 45, cysteine 40–cysteine 56, cysteine 44–cysteine 78, cysteine 66–cysteine 86, and cysteine 80–cysteine 104.

It belongs to the colipase family. Forms a 1:1 stoichiometric complex with pancreatic lipase. As to expression, expressed by the pancreas.

Its subcellular location is the secreted. Its function is as follows. Colipase is a cofactor of pancreatic lipase. It allows the lipase to anchor itself to the lipid-water interface. Without colipase the enzyme is washed off by bile salts, which have an inhibitory effect on the lipase. In terms of biological role, enterostatin has a biological activity as a satiety signal. The polypeptide is Colipase (CLPS) (Oryctolagus cuniculus (Rabbit)).